We begin with the raw amino-acid sequence, 649 residues long: Putative cystathionine gamma-synthase YML082W (649 aa).

The tract at residues 242–273 (NEANHGEDHDGGISGEVDSQEEPHNGLVSTIP) is disordered. A Phosphoserine modification is found at Ser287. Lys451 is subject to N6-(pyridoxal phosphate)lysine.

This sequence belongs to the trans-sulfuration enzymes family. MET7 subfamily. The cofactor is pyridoxal 5'-phosphate.

It catalyses the reaction O-succinyl-L-homoserine + L-cysteine = L,L-cystathionine + succinate + H(+). The protein operates within amino-acid biosynthesis; L-methionine biosynthesis via de novo pathway; L-cystathionine from O-succinyl-L-homoserine: step 1/1. Catalyzes the formation of L-cystathionine from O-succinyl-L-homoserine (OSHS) and L-cysteine, via a gamma-replacement reaction. In the absence of thiol, catalyzes gamma-elimination to form 2-oxobutanoate, succinate and ammonia. The chain is Putative cystathionine gamma-synthase YML082W from Saccharomyces cerevisiae (strain ATCC 204508 / S288c) (Baker's yeast).